Reading from the N-terminus, the 693-residue chain is DNA ligase (693 aa).

NAD(+) contacts are provided by residues 45–49 (DSEYD), 94–95 (SI), and Glu131. Lys133 functions as the N6-AMP-lysine intermediate in the catalytic mechanism. NAD(+) contacts are provided by Arg154, Glu190, Lys307, and Lys331. Zn(2+) contacts are provided by Cys429, Cys432, Cys447, and Cys453. In terms of domain architecture, BRCT spans 615-693 (ASSSKLEGKT…EEGLLSLLAE (79 aa)).

It belongs to the NAD-dependent DNA ligase family. LigA subfamily. Requires Mg(2+) as cofactor. It depends on Mn(2+) as a cofactor.

It catalyses the reaction NAD(+) + (deoxyribonucleotide)n-3'-hydroxyl + 5'-phospho-(deoxyribonucleotide)m = (deoxyribonucleotide)n+m + AMP + beta-nicotinamide D-nucleotide.. DNA ligase that catalyzes the formation of phosphodiester linkages between 5'-phosphoryl and 3'-hydroxyl groups in double-stranded DNA using NAD as a coenzyme and as the energy source for the reaction. It is essential for DNA replication and repair of damaged DNA. The chain is DNA ligase from Methylobacillus flagellatus (strain ATCC 51484 / DSM 6875 / VKM B-1610 / KT).